We begin with the raw amino-acid sequence, 245 residues long: 4-hydroxy-tetrahydrodipicolinate reductase (245 aa).

NAD(+)-binding positions include 7–12 (GAKGKV), 75–77 (GTT), and 102–105 (APNF). The active-site Proton donor/acceptor is the H132. H133 contacts (S)-2,3,4,5-tetrahydrodipicolinate. The active-site Proton donor is K136. 142–143 (GT) is a binding site for (S)-2,3,4,5-tetrahydrodipicolinate.

It belongs to the DapB family.

The protein resides in the cytoplasm. It catalyses the reaction (S)-2,3,4,5-tetrahydrodipicolinate + NAD(+) + H2O = (2S,4S)-4-hydroxy-2,3,4,5-tetrahydrodipicolinate + NADH + H(+). It carries out the reaction (S)-2,3,4,5-tetrahydrodipicolinate + NADP(+) + H2O = (2S,4S)-4-hydroxy-2,3,4,5-tetrahydrodipicolinate + NADPH + H(+). Its pathway is amino-acid biosynthesis; L-lysine biosynthesis via DAP pathway; (S)-tetrahydrodipicolinate from L-aspartate: step 4/4. Its function is as follows. Catalyzes the conversion of 4-hydroxy-tetrahydrodipicolinate (HTPA) to tetrahydrodipicolinate. This chain is 4-hydroxy-tetrahydrodipicolinate reductase, found in Mycobacterium sp. (strain KMS).